Here is a 501-residue protein sequence, read N- to C-terminus: Aspartyl/glutamyl-tRNA(Asn/Gln) amidotransferase subunit B (501 aa).

Residues 271–299 (VQETRHYQETDGSTSKGRPKETAEDYRYF) form a disordered region. A compositionally biased stretch (basic and acidic residues) spans 288 to 299 (RPKETAEDYRYF).

It belongs to the GatB/GatE family. GatB subfamily. Heterotrimer of A, B and C subunits.

The catalysed reaction is L-glutamyl-tRNA(Gln) + L-glutamine + ATP + H2O = L-glutaminyl-tRNA(Gln) + L-glutamate + ADP + phosphate + H(+). It carries out the reaction L-aspartyl-tRNA(Asn) + L-glutamine + ATP + H2O = L-asparaginyl-tRNA(Asn) + L-glutamate + ADP + phosphate + 2 H(+). Functionally, allows the formation of correctly charged Asn-tRNA(Asn) or Gln-tRNA(Gln) through the transamidation of misacylated Asp-tRNA(Asn) or Glu-tRNA(Gln) in organisms which lack either or both of asparaginyl-tRNA or glutaminyl-tRNA synthetases. The reaction takes place in the presence of glutamine and ATP through an activated phospho-Asp-tRNA(Asn) or phospho-Glu-tRNA(Gln). This Corynebacterium diphtheriae (strain ATCC 700971 / NCTC 13129 / Biotype gravis) protein is Aspartyl/glutamyl-tRNA(Asn/Gln) amidotransferase subunit B.